A 235-amino-acid chain; its full sequence is Segregation and condensation protein A (235 aa).

It belongs to the ScpA family. As to quaternary structure, component of a cohesin-like complex composed of ScpA, ScpB and the Smc homodimer, in which ScpA and ScpB bind to the head domain of Smc. The presence of the three proteins is required for the association of the complex with DNA.

Its subcellular location is the cytoplasm. In terms of biological role, participates in chromosomal partition during cell division. May act via the formation of a condensin-like complex containing Smc and ScpB that pull DNA away from mid-cell into both cell halves. The sequence is that of Segregation and condensation protein A from Streptococcus mutans serotype c (strain ATCC 700610 / UA159).